A 120-amino-acid polypeptide reads, in one-letter code: uncharacterized protein (120 aa).

The first 19 residues, 1 to 19 (MKKIVCAVVALLLTLPAWA), serve as a signal peptide directing secretion.

This is an uncharacterized protein from Salmonella typhimurium (strain LT2 / SGSC1412 / ATCC 700720).